We begin with the raw amino-acid sequence, 395 residues long: Ankyrin repeat domain-containing protein 65 (395 aa).

10 ANK repeats span residues Gln-52–Glu-81, Ala-85–Ala-114, Ala-118–Ala-147, Ala-151–Thr-180, Arg-185–Arg-212, Leu-213–Ala-241, Val-245–Leu-274, His-278–Ser-307, Leu-311–Ala-340, and Leu-344–Leu-373.

This Bos taurus (Bovine) protein is Ankyrin repeat domain-containing protein 65 (ANKRD65).